The following is a 284-amino-acid chain: ATP phosphoribosyltransferase (284 aa).

The protein belongs to the ATP phosphoribosyltransferase family. Long subfamily. Mg(2+) is required as a cofactor.

It localises to the cytoplasm. The enzyme catalyses 1-(5-phospho-beta-D-ribosyl)-ATP + diphosphate = 5-phospho-alpha-D-ribose 1-diphosphate + ATP. The protein operates within amino-acid biosynthesis; L-histidine biosynthesis; L-histidine from 5-phospho-alpha-D-ribose 1-diphosphate: step 1/9. With respect to regulation, feedback inhibited by histidine. Catalyzes the condensation of ATP and 5-phosphoribose 1-diphosphate to form N'-(5'-phosphoribosyl)-ATP (PR-ATP). Has a crucial role in the pathway because the rate of histidine biosynthesis seems to be controlled primarily by regulation of HisG enzymatic activity. This Corynebacterium kroppenstedtii (strain DSM 44385 / JCM 11950 / CIP 105744 / CCUG 35717) protein is ATP phosphoribosyltransferase.